The primary structure comprises 100 residues: Putative pterin-4-alpha-carbinolamine dehydratase (100 aa).

It belongs to the pterin-4-alpha-carbinolamine dehydratase family.

The catalysed reaction is (4aS,6R)-4a-hydroxy-L-erythro-5,6,7,8-tetrahydrobiopterin = (6R)-L-erythro-6,7-dihydrobiopterin + H2O. In Bradyrhizobium sp. (strain ORS 278), this protein is Putative pterin-4-alpha-carbinolamine dehydratase.